The primary structure comprises 156 residues: Small ribosomal subunit protein uS7 (156 aa).

Belongs to the universal ribosomal protein uS7 family. In terms of assembly, part of the 30S ribosomal subunit. Contacts proteins S9 and S11.

One of the primary rRNA binding proteins, it binds directly to 16S rRNA where it nucleates assembly of the head domain of the 30S subunit. Is located at the subunit interface close to the decoding center, probably blocks exit of the E-site tRNA. This chain is Small ribosomal subunit protein uS7, found in Mycoplasmopsis synoviae (strain 53) (Mycoplasma synoviae).